A 446-amino-acid chain; its full sequence is Glucose-6-phosphate isomerase (446 aa).

Glutamate 288 acts as the Proton donor in catalysis. Active-site residues include histidine 309 and lysine 423.

It belongs to the GPI family.

The protein resides in the cytoplasm. The catalysed reaction is alpha-D-glucose 6-phosphate = beta-D-fructose 6-phosphate. Its pathway is carbohydrate biosynthesis; gluconeogenesis. It participates in carbohydrate degradation; glycolysis; D-glyceraldehyde 3-phosphate and glycerone phosphate from D-glucose: step 2/4. Its function is as follows. Catalyzes the reversible isomerization of glucose-6-phosphate to fructose-6-phosphate. In Lactobacillus delbrueckii subsp. bulgaricus (strain ATCC 11842 / DSM 20081 / BCRC 10696 / JCM 1002 / NBRC 13953 / NCIMB 11778 / NCTC 12712 / WDCM 00102 / Lb 14), this protein is Glucose-6-phosphate isomerase.